A 702-amino-acid polypeptide reads, in one-letter code: Methionine--tRNA ligase (702 aa).

Positions 23–33 (PYANGPLHLGH) match the 'HIGH' region motif. Zn(2+) is bound by residues C154, C157, C167, and C170. The short motif at 341 to 345 (KMSKS) is the 'KMSKS' region element. K344 provides a ligand contact to ATP. The interval 562–593 (LAPPPASAKQQNASMSNTAPPPTAEEPETTAP) is disordered. Polar residues predominate over residues 569–578 (AKQQNASMSN). The tRNA-binding domain maps to 599-702 (DFAKLDLRIG…SSAQPGMPVR (104 aa)).

The protein belongs to the class-I aminoacyl-tRNA synthetase family. MetG type 1 subfamily. As to quaternary structure, homodimer. Zn(2+) serves as cofactor.

It localises to the cytoplasm. It catalyses the reaction tRNA(Met) + L-methionine + ATP = L-methionyl-tRNA(Met) + AMP + diphosphate. Is required not only for elongation of protein synthesis but also for the initiation of all mRNA translation through initiator tRNA(fMet) aminoacylation. The polypeptide is Methionine--tRNA ligase (Xylella fastidiosa (strain M23)).